The chain runs to 548 residues: Folylpolyglutamate synthase (548 aa).

130-133 serves as a coordination point for ATP; sequence GKGS. Residues serine 157, glutamate 234, and histidine 262 each contribute to the Mg(2+) site. Residues arginine 382 and aspartate 396 each contribute to the ATP site.

This sequence belongs to the folylpolyglutamate synthase family. A monovalent cation is required as a cofactor.

It is found in the mitochondrion inner membrane. The protein localises to the mitochondrion matrix. It localises to the cytoplasm. The enzyme catalyses (6S)-5,6,7,8-tetrahydrofolyl-(gamma-L-Glu)(n) + L-glutamate + ATP = (6S)-5,6,7,8-tetrahydrofolyl-(gamma-L-Glu)(n+1) + ADP + phosphate + H(+). The protein operates within cofactor biosynthesis; tetrahydrofolylpolyglutamate biosynthesis. Catalyzes conversion of folates to polyglutamate derivatives allowing concentration of folate compounds in the cell and the intracellular retention of these cofactors, which are important substrates for most of the folate-dependent enzymes that are involved in one-carbon transfer reactions involved in purine, pyrimidine and amino acid synthesis. Required for methionine synthesis and maintenance of intact mitochondrial DNA. Involved in telomere maintenance. This Saccharomyces cerevisiae (strain FostersB) (Baker's yeast) protein is Folylpolyglutamate synthase.